The following is a 429-amino-acid chain: Uracil permease (429 aa).

Topologically, residues 1 to 13 (MTRRAIGVSERPP) are cytoplasmic. A helical membrane pass occupies residues 14 to 37 (LLQTIPLSLQHLFAMFGATVLVPV). Residues 38 to 41 (LFHI) lie on the Periplasmic side of the membrane. A helical transmembrane segment spans residues 42 to 61 (NPATVLLFNGIGTLLYLFIC). Over 62 to 64 (KGK) the chain is Cytoplasmic. Residues 65–81 (IPAYLGSSFAFISPVLL) traverse the membrane as a discontinuously helical segment. Position 73 (phenylalanine 73) interacts with uracil. Residues 82–89 (LLPLGYEV) are Periplasmic-facing. The helical transmembrane segment at 90 to 110 (ALGGFIMCGVLFCLVSFIVKK) threads the bilayer. At 111-122 (AGTGWLDVLFPP) the chain is on the cytoplasmic side. Residues 123–144 (AAMGAIVAVIGLELAGVAAGMA) form a helical membrane-spanning segment. Topologically, residues 145–155 (GLLPAEGQTPD) are periplasmic. The helical transmembrane segment at 156–171 (SKTIIISITTLAVTVL) threads the bilayer. Residues 172–178 (GSVLFRG) are Cytoplasmic-facing. Residues 179 to 199 (FLAIIPILIGVLVGYALSFAM) traverse the membrane as a helical segment. At 200-224 (GIVDTTPIINAHWFALPTLYTPRFE) the chain is on the periplasmic side. Residues 225-248 (WFAILTILPAALVVIAEHVGHLVV) traverse the membrane as a helical segment. Glutamate 241 lines the uracil pocket. Over 249–261 (TANIVKKDLLRDP) the chain is Cytoplasmic. Residues 262-281 (GLHRSMFANGLSTVISGFFG) traverse the membrane as a helical segment. Residues 282–298 (STPNTTYGENIGVMAIT) traverse the membrane as a discontinuously helical segment. Uracil contacts are provided by glycine 289 and glutamate 290. Over 299 to 301 (RVY) the chain is Cytoplasmic. A helical transmembrane segment spans residues 302–319 (STWVIGGAAIFAILLSCV). Residues 320–332 (GKLAAAIQMIPLP) are Periplasmic-facing. Residues 333-354 (VMGGVSLLLYGVIGASGIRVLI) form a helical membrane-spanning segment. At 355–365 (ESKVDYNKAQN) the chain is on the cytoplasmic side. The segment at residues 366–401 (LILTSVILIIGVSGAKVNIGAAELKGMALATIVGIG) is an intramembrane region (discontinuously helical). The Cytoplasmic segment spans residues 402–429 (LSLIFKLISVLRPEEVVLDAEDADITDK).

This sequence belongs to the nucleobase:cation symporter-2 (NCS2) (TC 2.A.40) family.

The protein resides in the cell inner membrane. It catalyses the reaction uracil(in) + H(+)(in) = uracil(out) + H(+)(out). Its function is as follows. Transport of uracil in the cell. The polypeptide is Uracil permease (uraA) (Escherichia coli O157:H7).